The sequence spans 554 residues: MRSDVIKKGLERAPHRSLLKALGITDDEMRRPFIGIVSSWNEIIPGHVHLDKVVEAVKAGVRMAGGVPFVFPTIGICDGIAMDHRGMKFSLPSRELIADSIEIVASGFPFDGLVFVPNCDKITPGMMMAMGRLNIPSVLISGGPMLAGRYNGRDIDLITVFEAVGGYKVGKVDEETLKAIEDLACPGAGSCAGLFTANTMNSLAEALGIAPRGNGTVPAVHAKRLRMAKEAGMLVVELVKRDVKPRDIVTLDSFMNAVMVDLATGGSTNTVLHLKAIAESFGIDFDIKLFDELSRKIPHICNISPVGPYHIQDLDDAGGIYAVMKRLQENGLLKEDAMTIYLRKIGDLVREAKILNEDVIRPFDNPYHKEGGLGILFGNLAPEGAVAKLSGVPEKMMHHVGPAVVFEDGEEATKAILSGKIKKGDVVVIRYEGPKGGPGMREMLSPTSAIVGMGLAEDVALITDGRFSGGSHGAVIGHVSPEAAEGGPIGIVKDGDLIEIDFEKRTLNLLISDEEFERRMKEFTPLVKEVDSDYLRRYAFFVQSASKGAIFRKP.

Aspartate 78 lines the Mg(2+) pocket. Cysteine 119 is a [2Fe-2S] cluster binding site. Residues aspartate 120 and lysine 121 each contribute to the Mg(2+) site. Lysine 121 carries the N6-carboxylysine modification. Cysteine 191 contributes to the [2Fe-2S] cluster binding site. Glutamate 442 provides a ligand contact to Mg(2+). The active-site Proton acceptor is serine 468.

The protein belongs to the IlvD/Edd family. In terms of assembly, homodimer. [2Fe-2S] cluster serves as cofactor. The cofactor is Mg(2+).

It carries out the reaction (2R)-2,3-dihydroxy-3-methylbutanoate = 3-methyl-2-oxobutanoate + H2O. The enzyme catalyses (2R,3R)-2,3-dihydroxy-3-methylpentanoate = (S)-3-methyl-2-oxopentanoate + H2O. It functions in the pathway amino-acid biosynthesis; L-isoleucine biosynthesis; L-isoleucine from 2-oxobutanoate: step 3/4. Its pathway is amino-acid biosynthesis; L-valine biosynthesis; L-valine from pyruvate: step 3/4. In terms of biological role, functions in the biosynthesis of branched-chain amino acids. Catalyzes the dehydration of (2R,3R)-2,3-dihydroxy-3-methylpentanoate (2,3-dihydroxy-3-methylvalerate) into 2-oxo-3-methylpentanoate (2-oxo-3-methylvalerate) and of (2R)-2,3-dihydroxy-3-methylbutanoate (2,3-dihydroxyisovalerate) into 2-oxo-3-methylbutanoate (2-oxoisovalerate), the penultimate precursor to L-isoleucine and L-valine, respectively. This chain is Dihydroxy-acid dehydratase, found in Thermotoga petrophila (strain ATCC BAA-488 / DSM 13995 / JCM 10881 / RKU-1).